Here is a 185-residue protein sequence, read N- to C-terminus: uncharacterized protein (185 aa).

4 consecutive transmembrane segments (helical) span residues 5–25 (SFLI…RIWL), 63–83 (LATV…LILI), 97–117 (FLGL…VLLI), and 149–169 (IIPA…GLQF).

The protein belongs to the YggT family.

It is found in the cell membrane. This is an uncharacterized protein from Vibrio alginolyticus.